The following is a 315-amino-acid chain: Cobalamin biosynthesis protein CobD (315 aa).

7 consecutive transmembrane segments (helical) span residues 1–21, 50–70, 79–99, 151–171, 209–229, 250–270, and 291–311; these read MLDI…YWFP, VFGG…PFII, VIYH…KSLH, DGII…AMMY, VTGI…FYSI, AAAA…GEVV, and IILM…IICF.

It belongs to the CobD/CbiB family.

It localises to the cell membrane. Its pathway is cofactor biosynthesis; adenosylcobalamin biosynthesis. In terms of biological role, converts cobyric acid to cobinamide by the addition of aminopropanol on the F carboxylic group. This is Cobalamin biosynthesis protein CobD from Clostridium acetobutylicum (strain ATCC 824 / DSM 792 / JCM 1419 / IAM 19013 / LMG 5710 / NBRC 13948 / NRRL B-527 / VKM B-1787 / 2291 / W).